The sequence spans 129 residues: Small ribosomal subunit protein uS11 (129 aa).

This sequence belongs to the universal ribosomal protein uS11 family. As to quaternary structure, part of the 30S ribosomal subunit. Interacts with proteins S7 and S18. Binds to IF-3.

Located on the platform of the 30S subunit, it bridges several disparate RNA helices of the 16S rRNA. Forms part of the Shine-Dalgarno cleft in the 70S ribosome. The sequence is that of Small ribosomal subunit protein uS11 from Haemophilus influenzae (strain ATCC 51907 / DSM 11121 / KW20 / Rd).